A 460-amino-acid chain; its full sequence is tRNA(Ile)-lysidine synthase (460 aa).

30 to 35 contributes to the ATP binding site; it reads SGGLDS.

This sequence belongs to the tRNA(Ile)-lysidine synthase family.

It is found in the cytoplasm. It catalyses the reaction cytidine(34) in tRNA(Ile2) + L-lysine + ATP = lysidine(34) in tRNA(Ile2) + AMP + diphosphate + H(+). Functionally, ligates lysine onto the cytidine present at position 34 of the AUA codon-specific tRNA(Ile) that contains the anticodon CAU, in an ATP-dependent manner. Cytidine is converted to lysidine, thus changing the amino acid specificity of the tRNA from methionine to isoleucine. The sequence is that of tRNA(Ile)-lysidine synthase from Yersinia pestis.